Here is a 357-residue protein sequence, read N- to C-terminus: Mating-type protein MAT-1 (357 aa).

Residues R53–R108 constitute a DNA-binding region (alpha box).

Belongs to the MATALPHA1 family.

Its subcellular location is the nucleus. Mating type proteins are sequence specific DNA-binding proteins that act as master switches in fungal differentiation by controlling gene expression in a cell type-specific fashion. Transcriptional activator that induces the transcription of alpha-specific genes. This chain is Mating-type protein MAT-1 (MAT1), found in Fusarium oxysporum (Fusarium vascular wilt).